The following is a 410-amino-acid chain: Zinc finger TRAF-type-containing protein 1 (410 aa).

The span at 1–13 (MSGAEEAGGGGPA) shows a compositional bias: gly residues. The interval 1 to 22 (MSGAEEAGGGGPAAGPAGSVPA) is disordered. Residues 117-162 (CTVCLDLPKASVYQCTNGHLMCAGCFIHLLADARLKEEQATCPNCR) form an RING-type; degenerate zinc finger. Residues 158 to 231 (CPNCRCEISK…PWHGPFHELT (74 aa)) form a TRAF-type zinc finger.

This sequence belongs to the ZFTRAF1 family. Interacts with LGALS3.

The protein localises to the cytoplasm. Its subcellular location is the perinuclear region. The protein is Zinc finger TRAF-type-containing protein 1 of Bos taurus (Bovine).